Consider the following 506-residue polypeptide: 2-isopropylmalate synthase (506 aa).

Residues 4–266 form the Pyruvate carboxyltransferase domain; that stretch reads ILFMDTTLRD…EPSITLKEIK (263 aa). The Mn(2+) site is built by Asp-13, His-201, His-203, and Asn-237. A regulatory domain region spans residues 390–506; the sequence is NITQLQVHFV…KLKSFIQLVK (117 aa).

The protein belongs to the alpha-IPM synthase/homocitrate synthase family. LeuA type 1 subfamily. As to quaternary structure, homodimer. The cofactor is Mn(2+).

The protein localises to the cytoplasm. It carries out the reaction 3-methyl-2-oxobutanoate + acetyl-CoA + H2O = (2S)-2-isopropylmalate + CoA + H(+). Its pathway is amino-acid biosynthesis; L-leucine biosynthesis; L-leucine from 3-methyl-2-oxobutanoate: step 1/4. Catalyzes the condensation of the acetyl group of acetyl-CoA with 3-methyl-2-oxobutanoate (2-ketoisovalerate) to form 3-carboxy-3-hydroxy-4-methylpentanoate (2-isopropylmalate). This Bacillus thuringiensis subsp. konkukian (strain 97-27) protein is 2-isopropylmalate synthase.